The chain runs to 88 residues: Apolipoprotein C-I (88 aa).

The signal sequence occupies residues 1–26; that stretch reads MRLFISLPVLIVVLAMALEGPAPAQA.

Belongs to the apolipoprotein C1 family.

The protein resides in the secreted. Inhibitor of lipoprotein binding to the low density lipoprotein (LDL) receptor, LDL receptor-related protein, and very low density lipoprotein (VLDL) receptor. Associates with high density lipoproteins (HDL) and the triacylglycerol-rich lipoproteins in the plasma and makes up about 10% of the protein of the VLDL and 2% of that of HDL. Appears to interfere directly with fatty acid uptake and is also the major plasma inhibitor of cholesteryl ester transfer protein (CETP). Modulates the interaction of APOE with beta-migrating VLDL and inhibits binding of beta-VLDL to the LDL receptor-related protein. Binds free fatty acids and reduces their intracellular esterification. This Myodes glareolus (Bank vole) protein is Apolipoprotein C-I (APOC1).